We begin with the raw amino-acid sequence, 640 residues long: 1-deoxy-D-xylulose-5-phosphate synthase (640 aa).

Residues histidine 78 and 119 to 121 (GHS) contribute to the thiamine diphosphate site. Position 151 (aspartate 151) interacts with Mg(2+). Thiamine diphosphate is bound by residues 152-153 (GA), asparagine 180, tyrosine 289, and glutamate 371. Position 180 (asparagine 180) interacts with Mg(2+).

This sequence belongs to the transketolase family. DXPS subfamily. In terms of assembly, homodimer. It depends on Mg(2+) as a cofactor. Thiamine diphosphate is required as a cofactor.

It carries out the reaction D-glyceraldehyde 3-phosphate + pyruvate + H(+) = 1-deoxy-D-xylulose 5-phosphate + CO2. The protein operates within metabolic intermediate biosynthesis; 1-deoxy-D-xylulose 5-phosphate biosynthesis; 1-deoxy-D-xylulose 5-phosphate from D-glyceraldehyde 3-phosphate and pyruvate: step 1/1. Its function is as follows. Catalyzes the acyloin condensation reaction between C atoms 2 and 3 of pyruvate and glyceraldehyde 3-phosphate to yield 1-deoxy-D-xylulose-5-phosphate (DXP). The sequence is that of 1-deoxy-D-xylulose-5-phosphate synthase from Bartonella henselae (strain ATCC 49882 / DSM 28221 / CCUG 30454 / Houston 1) (Rochalimaea henselae).